A 350-amino-acid polypeptide reads, in one-letter code: UDP-N-acetylglucosamine--N-acetylmuramyl-(pentapeptide) pyrophosphoryl-undecaprenol N-acetylglucosamine transferase (350 aa).

UDP-N-acetyl-alpha-D-glucosamine-binding positions include Thr-9–Gly-11, Asn-123, Arg-159, Ser-181, and Gln-281.

It belongs to the glycosyltransferase 28 family. MurG subfamily.

The protein localises to the cell inner membrane. It carries out the reaction di-trans,octa-cis-undecaprenyl diphospho-N-acetyl-alpha-D-muramoyl-L-alanyl-D-glutamyl-meso-2,6-diaminopimeloyl-D-alanyl-D-alanine + UDP-N-acetyl-alpha-D-glucosamine = di-trans,octa-cis-undecaprenyl diphospho-[N-acetyl-alpha-D-glucosaminyl-(1-&gt;4)]-N-acetyl-alpha-D-muramoyl-L-alanyl-D-glutamyl-meso-2,6-diaminopimeloyl-D-alanyl-D-alanine + UDP + H(+). It functions in the pathway cell wall biogenesis; peptidoglycan biosynthesis. In terms of biological role, cell wall formation. Catalyzes the transfer of a GlcNAc subunit on undecaprenyl-pyrophosphoryl-MurNAc-pentapeptide (lipid intermediate I) to form undecaprenyl-pyrophosphoryl-MurNAc-(pentapeptide)GlcNAc (lipid intermediate II). This Helicobacter hepaticus (strain ATCC 51449 / 3B1) protein is UDP-N-acetylglucosamine--N-acetylmuramyl-(pentapeptide) pyrophosphoryl-undecaprenol N-acetylglucosamine transferase.